Reading from the N-terminus, the 385-residue chain is Odorant receptor 82a (385 aa).

Residues 1–32 (MGRLFQLQEYCLRAMGHKDDMDSTDSTALSLK) are Cytoplasmic-facing. Residues 33-53 (HISSLIFVISAQYPLISYVAY) traverse the membrane as a helical segment. Over 54–62 (NRNDMEKVT) the chain is Extracellular. A helical transmembrane segment spans residues 63 to 83 (ACLSVVFTNMLTVIKISTFLA). The Cytoplasmic segment spans residues 84–131 (NRKDFWEMIHRFRKMHEQSASHIPRYREGLDYVAEANKLASFLGRAYC). The chain crosses the membrane as a helical span at residues 132–152 (VSCGLTGLYFMLGPIVKIGVC). At 153–186 (RWHGTTCDKELPMPMKFPFNDLESPGYEVCFLYT) the chain is on the extracellular side. Residues 187-207 (VLVTVVVVAYASAVDGLFISF) form a helical membrane-spanning segment. Over 208–257 (AINLRAHFQTLQRQIENWEFPSSEPDTQIRLKSIVEYHVLLLSLSRKLRS) the chain is Cytoplasmic. The chain crosses the membrane as a helical span at residues 258–278 (IYTPTVMGQFVITSLQVGVII). The Extracellular portion of the chain corresponds to 279–290 (YQLVTNMDSVMD). Residues 291-311 (LLLYASFFGSIMLQLFIYCYG) traverse the membrane as a helical segment. At 312 to 357 (GEIIKAESLQVDTAVRLSNWHLASPKTRTSLSLIILQSQKEVLIRA) the chain is on the cytoplasmic side. Residues 358–378 (GFFVASLANFVGICRTALSLI) traverse the membrane as a helical segment. The Extracellular portion of the chain corresponds to 379–385 (TLIKSIE).

It belongs to the insect chemoreceptor superfamily. Heteromeric odorant receptor channel (TC 1.A.69) family. Or1a subfamily. As to quaternary structure, interacts with Orco. Complexes exist early in the endomembrane system in olfactory sensory neurons (OSNs), coupling these complexes to the conserved ciliary trafficking pathway. In terms of tissue distribution, expressed in olfactory sensory neurons in the antenna.

The protein localises to the cell membrane. In terms of biological role, odorant receptor which mediates acceptance or avoidance behavior, depending on its substrates. The odorant receptor repertoire encodes a large collection of odor stimuli that vary widely in identity, intensity, and duration. May form a complex with Orco to form odorant-sensing units, providing sensitive and prolonged odorant signaling and calcium permeability. The sequence is that of Odorant receptor 82a (Or82a) from Drosophila melanogaster (Fruit fly).